The following is a 121-amino-acid chain: Small ribosomal subunit protein uS13 (121 aa).

Residues His-91–Lys-121 form a disordered region.

Belongs to the universal ribosomal protein uS13 family. Part of the 30S ribosomal subunit. Forms a loose heterodimer with protein S19. Forms two bridges to the 50S subunit in the 70S ribosome.

Its function is as follows. Located at the top of the head of the 30S subunit, it contacts several helices of the 16S rRNA. In the 70S ribosome it contacts the 23S rRNA (bridge B1a) and protein L5 of the 50S subunit (bridge B1b), connecting the 2 subunits; these bridges are implicated in subunit movement. Contacts the tRNAs in the A and P-sites. The polypeptide is Small ribosomal subunit protein uS13 (Staphylococcus epidermidis (strain ATCC 35984 / DSM 28319 / BCRC 17069 / CCUG 31568 / BM 3577 / RP62A)).